The sequence spans 543 residues: Proline--tRNA ligase, chloroplastic/mitochondrial (543 aa).

The interval 41–63 (ATAPSGTASPETKSSEVDRLRSD) is disordered. Over residues 53 to 63 (KSSEVDRLRSD) the composition is skewed to basic and acidic residues.

It belongs to the class-II aminoacyl-tRNA synthetase family.

Its subcellular location is the plastid. It localises to the chloroplast. It is found in the mitochondrion. It catalyses the reaction tRNA(Pro) + L-proline + ATP = L-prolyl-tRNA(Pro) + AMP + diphosphate. In terms of biological role, catalyzes the attachment of proline to tRNA(Pro) in a two-step reaction: proline is first activated by ATP to form Pro-AMP and then transferred to the acceptor end of tRNA(Pro). This is Proline--tRNA ligase, chloroplastic/mitochondrial from Arabidopsis thaliana (Mouse-ear cress).